The primary structure comprises 201 residues: MTQDKPIVETISNAGEQVTNVFGQFWQLVTSKNTTNNGDSKPIKIEQLPIYAEDNAPLKQKFLPEEPLPLQREFATIRIACEQEYDRVAERFKVVDCAMTQTKKAATKCNAYLTEEWTALPKAAAITVGGMAGFVLGLKRGPVGRLLTTTIGLATMAAFCYPIEAVDVAKTGRAHAEQTWYSFQESPTPSAIVKTNLSPPK.

The transit peptide at 1–31 directs the protein to the mitochondrion; it reads MTQDKPIVETISNAGEQVTNVFGQFWQLVTS. Topologically, residues 32–117 are cytoplasmic; it reads KNTTNNGDSK…KCNAYLTEEW (86 aa). Residues 118-138 traverse the membrane as a helical segment; sequence TALPKAAAITVGGMAGFVLGL. The Mitochondrial intermembrane portion of the chain corresponds to 139–145; that stretch reads KRGPVGR. Residues 146 to 166 form a helical membrane-spanning segment; it reads LLTTTIGLATMAAFCYPIEAV. Over 167–201 the chain is Cytoplasmic; that stretch reads DVAKTGRAHAEQTWYSFQESPTPSAIVKTNLSPPK.

Belongs to the apolipoprotein O/MICOS complex subunit Mic27 family. As to quaternary structure, component of the mitochondrial contact site and cristae organizing system (MICOS) complex.

Its subcellular location is the mitochondrion outer membrane. Functionally, sustains mitochondrial morphology probably through maintaining cristae morphology. May act as a component of the MICOS complex, a large protein complex of the mitochondria. The polypeptide is MICOS complex subunit MIC27 (Caenorhabditis elegans).